Reading from the N-terminus, the 285-residue chain is 4-hydroxybenzoate octaprenyltransferase (285 aa).

8 helical membrane passes run 28 to 48 (LWAMWMAAGGPPAWGLFWIFV), 86 to 106 (IAAWEALAVAAVLALVAFALV), 110 to 130 (NALTKWLAVVAAVVAGTYPFF), 133 to 153 (FFAIPQAYLGIAFGFGIPMAF), 165 to 185 (WLMLLANVFWAVAYDTAYAMV), 210 to 230 (IMLCYAAFLALMAWAGVLLGL), 232 to 252 (WPYWVGLAAAAGCAGYHYTLI), and 262 to 284 (AAFRHNNWLGACVFAGTAVAYAI).

It belongs to the UbiA prenyltransferase family. Mg(2+) is required as a cofactor.

It is found in the cell inner membrane. It catalyses the reaction all-trans-octaprenyl diphosphate + 4-hydroxybenzoate = 4-hydroxy-3-(all-trans-octaprenyl)benzoate + diphosphate. It functions in the pathway cofactor biosynthesis; ubiquinone biosynthesis. Its function is as follows. Catalyzes the prenylation of para-hydroxybenzoate (PHB) with an all-trans polyprenyl group. Mediates the second step in the final reaction sequence of ubiquinone-8 (UQ-8) biosynthesis, which is the condensation of the polyisoprenoid side chain with PHB, generating the first membrane-bound Q intermediate 3-octaprenyl-4-hydroxybenzoate. In Cupriavidus necator (strain ATCC 17699 / DSM 428 / KCTC 22496 / NCIMB 10442 / H16 / Stanier 337) (Ralstonia eutropha), this protein is 4-hydroxybenzoate octaprenyltransferase.